A 356-amino-acid chain; its full sequence is Histidinol-phosphate aminotransferase 1 (356 aa).

Lys210 is subject to N6-(pyridoxal phosphate)lysine.

It belongs to the class-II pyridoxal-phosphate-dependent aminotransferase family. Histidinol-phosphate aminotransferase subfamily. In terms of assembly, homodimer. Pyridoxal 5'-phosphate serves as cofactor.

The enzyme catalyses L-histidinol phosphate + 2-oxoglutarate = 3-(imidazol-4-yl)-2-oxopropyl phosphate + L-glutamate. Its pathway is amino-acid biosynthesis; L-histidine biosynthesis; L-histidine from 5-phospho-alpha-D-ribose 1-diphosphate: step 7/9. The chain is Histidinol-phosphate aminotransferase 1 from Hydrogenovibrio crunogenus (strain DSM 25203 / XCL-2) (Thiomicrospira crunogena).